Consider the following 254-residue polypeptide: Phosphonates import ATP-binding protein PhnC (254 aa).

One can recognise an ABC transporter domain in the interval 2–246 (IQLKNVSKIY…VFDDIYNGGN (245 aa)). Residue 35-42 (GLSGAGKS) participates in ATP binding.

It belongs to the ABC transporter superfamily. Phosphonates importer (TC 3.A.1.9.1) family. The complex is composed of two ATP-binding proteins (PhnC), two transmembrane proteins (PhnE) and a solute-binding protein (PhnD).

It localises to the cell membrane. The catalysed reaction is phosphonate(out) + ATP + H2O = phosphonate(in) + ADP + phosphate + H(+). Functionally, part of the ABC transporter complex PhnCDE involved in phosphonates import. Responsible for energy coupling to the transport system. The polypeptide is Phosphonates import ATP-binding protein PhnC (Lactobacillus johnsonii (strain CNCM I-12250 / La1 / NCC 533)).